We begin with the raw amino-acid sequence, 312 residues long: Protein-methionine-sulfoxide reductase catalytic subunit MsrP (312 aa).

Residues 1–42 (MALFRYPRPLPSEITPRDMYLSRRSLIGGAAALGAVSATADA) constitute a signal peptide (tat-type signal). Mo-molybdopterin is bound by residues Asn68, 71-72 (YE), Cys126, Ser161, Asn211, Arg216, and 227-229 (GIK).

It belongs to the MsrP family. Heterodimer of a catalytic subunit (MsrP) and a heme-binding subunit (MsrQ). It depends on Mo-molybdopterin as a cofactor. Predicted to be exported by the Tat system. The position of the signal peptide cleavage has not been experimentally proven.

It localises to the periplasm. The enzyme catalyses L-methionyl-[protein] + a quinone + H2O = L-methionyl-(S)-S-oxide-[protein] + a quinol. It catalyses the reaction L-methionyl-[protein] + a quinone + H2O = L-methionyl-(R)-S-oxide-[protein] + a quinol. Functionally, part of the MsrPQ system that repairs oxidized periplasmic proteins containing methionine sulfoxide residues (Met-O), using respiratory chain electrons. Thus protects these proteins from oxidative-stress damage caused by reactive species of oxygen and chlorine generated by the host defense mechanisms. MsrPQ is essential for the maintenance of envelope integrity under bleach stress, rescuing a wide series of structurally unrelated periplasmic proteins from methionine oxidation. The catalytic subunit MsrP is non-stereospecific, being able to reduce both (R-) and (S-) diastereoisomers of methionine sulfoxide. The chain is Protein-methionine-sulfoxide reductase catalytic subunit MsrP from Gluconobacter oxydans (strain 621H) (Gluconobacter suboxydans).